We begin with the raw amino-acid sequence, 288 residues long: 2-methoxy-6-polyprenyl-1,4-benzoquinol methylase, mitochondrial (288 aa).

A mitochondrion-targeting transit peptide spans 1-27 (MALRSVSRRLGSRILNQRSFVASLHSH). S-adenosyl-L-methionine-binding positions include T94, D130, and 160-161 (DA).

The protein belongs to the class I-like SAM-binding methyltransferase superfamily. MenG/UbiE family. In terms of assembly, component of a multi-subunit COQ enzyme complex.

The protein localises to the mitochondrion inner membrane. The catalysed reaction is a 2-methoxy-6-(all-trans-polyprenyl)benzene-1,4-diol + S-adenosyl-L-methionine = a 5-methoxy-2-methyl-3-(all-trans-polyprenyl)benzene-1,4-diol + S-adenosyl-L-homocysteine + H(+). It participates in cofactor biosynthesis; ubiquinone biosynthesis. Functionally, methyltransferase required for the conversion of 2-polyprenyl-6-methoxy-1,4-benzoquinol (DDMQH2) to 2-polyprenyl-3-methyl-6-methoxy-1,4-benzoquinol (DMQH2). This Arabidopsis thaliana (Mouse-ear cress) protein is 2-methoxy-6-polyprenyl-1,4-benzoquinol methylase, mitochondrial.